Reading from the N-terminus, the 547-residue chain is Chaperonin GroEL (547 aa).

ATP-binding positions include 30 to 33, K51, 87 to 91, G415, and D495; these read TLGP and DGTTT.

Belongs to the chaperonin (HSP60) family. As to quaternary structure, forms a cylinder of 14 subunits composed of two heptameric rings stacked back-to-back. Interacts with the co-chaperonin GroES.

Its subcellular location is the cytoplasm. It catalyses the reaction ATP + H2O + a folded polypeptide = ADP + phosphate + an unfolded polypeptide.. Functionally, together with its co-chaperonin GroES, plays an essential role in assisting protein folding. The GroEL-GroES system forms a nano-cage that allows encapsulation of the non-native substrate proteins and provides a physical environment optimized to promote and accelerate protein folding. The polypeptide is Chaperonin GroEL (Thiobacillus denitrificans (strain ATCC 25259 / T1)).